Consider the following 490-residue polypeptide: Sushi domain-containing protein 4 (490 aa).

The tract at residues 1–20 (MYHGMNPSNGDGFLEQQLQQ) is disordered. Residues 1 to 41 (MYHGMNPSNGDGFLEQQLQQQQPQSPQRLLAVILWFQLALC) form the signal peptide. Over 42–319 (FGPAQLTGGF…PSTHETLLTT (278 aa)) the chain is Extracellular. Sushi domains are found at residues 55-119 (NVCA…VCIQ), 120-179 (EDCR…ICQG), 178-239 (QGCL…RCLA), and 241-304 (EVCP…YCIK). Cystine bridges form between C57-C99, C85-C117, C122-C165, C147-C177, C180-C224, C210-C237, C243-C289, and C274-C302. Residues N104 and N134 are each glycosylated (N-linked (GlcNAc...) asparagine). N-linked (GlcNAc...) asparagine glycosylation occurs at N192. The chain crosses the membrane as a helical span at residues 320-340 (WKIVAFTATSVLLVLLLVILA). Topologically, residues 341-490 (RMFQTKFKAH…DEIPLMEEDP (150 aa)) are cytoplasmic. A disordered region spans residues 394 to 490 (YPASVGQGCP…DEIPLMEEDP (97 aa)). Polar residues-rich tracts occupy residues 430–444 (CDST…QSLY) and 461–475 (DTIS…STSP). A compositionally biased stretch (acidic residues) spans 479–490 (IADEIPLMEEDP).

As to expression, high expression in brain and eye, with weaker expression in spinal cord and testis. Detected in white matter of brain and in the outer segments of photoreceptors.

It localises to the membrane. Acts as a complement inhibitor by disrupting the formation of the classical C3 convertase. Isoform 3 inhibits the classical complement pathway, while membrane-bound isoform 1 inhibits deposition of C3b via both the classical and alternative complement pathways. This Mus musculus (Mouse) protein is Sushi domain-containing protein 4 (Susd4).